The primary structure comprises 714 residues: MEASCILPVLKKKLAFLSGGKDRRSGLILTIPLCTEQTSMEELSTTLDYLLGIPSEKCKARGFTVIVDGRKSQWNIVKTVVLMLQNVIPAEVSLVCVVKPDEFWDKKVTHFCFWKEKDRLGFEVILVSANKLTRYIEPCQLTDEFGGSLLYDHLDWVNKRLVFEKFTKESTSLLDELIVINENEKGSQAEKDRSSESNILPSFDPETVLQTGHELLSELQQRRFNGSEGGGGGGTAWSPMDDELLAQPQVMKLLDSLREQYTKYQEVCRQRSKRSQLEEIQTKVMQVVNWLEGPGTDQLRTQWGIGDSIRASQALQQKHEEIESQHSEWFAVYVELNQQIAALLSAGDEEDLMELKGLQQQLSDVCYRQASQLEFRQNVLQSAYEFHMTAQDLSQQLDGLLGMLCADVAPADGAAIQQTLKHLEEKLKSVESALQTLREKGQALLDQMSNQTSFSYGKEVGVENKENIDHIHSVMEDMQLRKQRCEDMVDVRRLKMLQMVQLFKCEEDASQAVEWLGELLDALLKTHIRLGDDSQETKVLLEKHKKFVDVAQSTYDYGRQLLQATVVLCQSLRCTTRSSGDTLPRLNRVWKQFTVTSDERQHRLEMASAFHTAAEKIVRESPELAELLVDVEAYEEVETLGKGLLDRLTVPVIFPDGSEQFFGSPGDMASSAESIRERMKLVEEKRFLQEEAEQRLEEEEEEEEAALEVEPRES.

The region spanning 1–153 (MEASCILPVL…EFGGSLLYDH (153 aa)) is the CRAL-TRIO domain. 3 Spectrin repeats span residues 275-381 (SQLE…NVLQ), 384-497 (YEFH…LKML), and 503-605 (FKCE…HRLE). The tract at residues 691–714 (EAEQRLEEEEEEEEAALEVEPRES) is disordered. Over residues 696–707 (LEEEEEEEEAAL) the composition is skewed to acidic residues.

The protein belongs to the SOLO family.

Its function is as follows. May act as the primary docking protein directing membrane turnover and assembly of the transient receptor potential channels trpc4 and trpc5. Binds phospholipids. The sequence is that of SEC14 domain and spectrin repeat-containing protein 1 (sestd1) from Danio rerio (Zebrafish).